The sequence spans 35 residues: uncharacterized protein (35 aa).

The chain crosses the membrane as a helical span at residues Leu-10–Leu-30.

The protein resides in the membrane. This is an uncharacterized protein from Salmonella typhimurium (strain LT2 / SGSC1412 / ATCC 700720).